The chain runs to 163 residues: NADH-quinone oxidoreductase subunit I (163 aa).

2 consecutive 4Fe-4S ferredoxin-type domains span residues 53-83 and 94-123; these read LRRY…IEAG and VRYD…EGPN. Positions 63, 66, 69, 73, 103, 106, 109, and 113 each coordinate [4Fe-4S] cluster.

Belongs to the complex I 23 kDa subunit family. In terms of assembly, NDH-1 is composed of 14 different subunits. Subunits NuoA, H, J, K, L, M, N constitute the membrane sector of the complex. The cofactor is [4Fe-4S] cluster.

Its subcellular location is the cell inner membrane. It carries out the reaction a quinone + NADH + 5 H(+)(in) = a quinol + NAD(+) + 4 H(+)(out). Functionally, NDH-1 shuttles electrons from NADH, via FMN and iron-sulfur (Fe-S) centers, to quinones in the respiratory chain. The immediate electron acceptor for the enzyme in this species is believed to be ubiquinone. Couples the redox reaction to proton translocation (for every two electrons transferred, four hydrogen ions are translocated across the cytoplasmic membrane), and thus conserves the redox energy in a proton gradient. The chain is NADH-quinone oxidoreductase subunit I from Bartonella quintana (strain Toulouse) (Rochalimaea quintana).